Reading from the N-terminus, the 240-residue chain is ATP-dependent dethiobiotin synthetase BioD 1 (240 aa).

13–18 serves as a coordination point for ATP; sequence DVGKTV. Residue Thr-17 coordinates Mg(2+). Lys-38 is an active-site residue. Residue Ser-42 coordinates substrate. Residues Asp-55, 116-119, 176-177, 205-207, and Glu-212 each bind ATP; these read EGAG, NE, and PYL. 2 residues coordinate Mg(2+): Asp-55 and Glu-116.

It belongs to the dethiobiotin synthetase family. Homodimer. Requires Mg(2+) as cofactor.

It is found in the cytoplasm. The catalysed reaction is (7R,8S)-7,8-diammoniononanoate + CO2 + ATP = (4R,5S)-dethiobiotin + ADP + phosphate + 3 H(+). Its pathway is cofactor biosynthesis; biotin biosynthesis; biotin from 7,8-diaminononanoate: step 1/2. Functionally, catalyzes a mechanistically unusual reaction, the ATP-dependent insertion of CO2 between the N7 and N8 nitrogen atoms of 7,8-diaminopelargonic acid (DAPA, also called 7,8-diammoniononanoate) to form a ureido ring. This Yersinia pestis protein is ATP-dependent dethiobiotin synthetase BioD 1.